We begin with the raw amino-acid sequence, 478 residues long: Lysosome membrane protein 2 (478 aa).

Over 2–4 (ARC) the chain is Cytoplasmic. The chain crosses the membrane as a helical span at residues 5–27 (CFYTAGTLSLLLLVTSVTLLVAR). Over 28–433 (VFQKAVDQTI…QLKSVINTTL (406 aa)) the chain is Lumenal. N45, N68, N105, and N122 each carry an N-linked (GlcNAc...) asparagine glycan. An important for interaction with GBA1 region spans residues 155-191 (IIEAMLKAYQQTLFVTHTVHELLWGYKDEVLSLVHIF). Residues N206, N224, N249, and N304 are each glycosylated (N-linked (GlcNAc...) asparagine). Cystine bridges form between C274–C329 and C312–C318. N-linked (GlcNAc...) asparagine glycosylation is found at N325, N412, and N430. Residues 434 to 459 (IVTNIPYIIMALGVFFGLIFTWLACR) traverse the membrane as a helical segment. The Cytoplasmic segment spans residues 460-478 (GQGSTDEGTADERAPLIRT).

Belongs to the CD36 family. In terms of assembly, interacts with GBA1. In terms of processing, acylated by palmitic acid group(s).

The protein resides in the lysosome membrane. In terms of biological role, acts as a lysosomal receptor for glucosylceramidase (GBA1) targeting. The protein is Lysosome membrane protein 2 (Scarb2) of Rattus norvegicus (Rat).